Reading from the N-terminus, the 107-residue chain is Circadian clock oscillator protein KaiB (107 aa).

It belongs to the KaiB family. May undergo a major conformational rearrangment; in the free state forms homooligomers. When bound to KaiC switches to a monomeric thioredoxin-fold (KaiB(fs)). The active oscillator complex is probably KaiC(6):KaiB(6).

Component of the KaiBC clock protein complex, which constitutes the main circadian regulator in cyanobacteria; it may modify the ATPase activity of KaiC. Its function is as follows. Does not stimulate dephosphorylation of endogenous KaiC, although it does stimulate dephosphorylation of KiaC from S.elongatus strain PCC 7942. Reduces the ATPase activity of KaiC by about half in vitro, which may be its function in vivo. Functionally, may be a metamorphic protein which reversibly switches between an inactive tetrameric fold and a rare, thioredoxin-like monomeric fold (KaiB(fs)). KaiB(fs) binds phospho-KaiC, and perhaps clock output effectors. The chain is Circadian clock oscillator protein KaiB from Prochlorococcus marinus subsp. pastoris (strain CCMP1986 / NIES-2087 / MED4).